The primary structure comprises 94 residues: Small ribosomal subunit protein uS17 (94 aa).

The protein belongs to the universal ribosomal protein uS17 family. In terms of assembly, part of the 30S ribosomal subunit.

Functionally, one of the primary rRNA binding proteins, it binds specifically to the 5'-end of 16S ribosomal RNA. In Deinococcus geothermalis (strain DSM 11300 / CIP 105573 / AG-3a), this protein is Small ribosomal subunit protein uS17.